A 675-amino-acid chain; its full sequence is Methionine--tRNA ligase (675 aa).

A 'HIGH' region motif is present at residues 15 to 25; sequence PYANGSIHLGH. Zn(2+) contacts are provided by Cys146, Cys149, Cys159, and Cys162. Residues 331-335 carry the 'KMSKS' region motif; it reads KMSKS. Lys334 provides a ligand contact to ATP. One can recognise a tRNA-binding domain in the interval 574–675; sequence DFAKIDLRIA…EGAQPGMKVK (102 aa).

The protein belongs to the class-I aminoacyl-tRNA synthetase family. MetG type 1 subfamily. In terms of assembly, homodimer. It depends on Zn(2+) as a cofactor.

It localises to the cytoplasm. It carries out the reaction tRNA(Met) + L-methionine + ATP = L-methionyl-tRNA(Met) + AMP + diphosphate. Functionally, is required not only for elongation of protein synthesis but also for the initiation of all mRNA translation through initiator tRNA(fMet) aminoacylation. The protein is Methionine--tRNA ligase of Pseudoalteromonas atlantica (strain T6c / ATCC BAA-1087).